Reading from the N-terminus, the 152-residue chain is Small ribosomal subunit protein bS16 (152 aa).

Residues 118 to 130 (AEKHKAKASEKKA) are compositionally biased toward basic and acidic residues. The disordered stretch occupies residues 118-152 (AEKHKAKASEKKAAAAASADEAGSAAADDAEGSES). Over residues 131-144 (AAAASADEAGSAAA) the composition is skewed to low complexity.

The protein belongs to the bacterial ribosomal protein bS16 family.

This is Small ribosomal subunit protein bS16 from Beutenbergia cavernae (strain ATCC BAA-8 / DSM 12333 / CCUG 43141 / JCM 11478 / NBRC 16432 / NCIMB 13614 / HKI 0122).